Consider the following 356-residue polypeptide: Tyrosine recombinase XerS (356 aa).

One can recognise a Core-binding (CB) domain in the interval 16–121; the sequence is IMPWYVLDYY…ALSSLYKYLT (106 aa). Residues 169-354 enclose the Tyr recombinase domain; that stretch reads AFLDYVDKEY…VNDEQKTALD (186 aa). Residues arginine 210, lysine 234, histidine 306, arginine 309, and histidine 332 contribute to the active site. The active-site O-(3'-phospho-DNA)-tyrosine intermediate is the tyrosine 341.

Belongs to the 'phage' integrase family. XerS subfamily.

The protein resides in the cytoplasm. FtsK is required for recombination. In terms of biological role, site-specific tyrosine recombinase, which acts by catalyzing the cutting and rejoining of the recombining DNA molecules. Essential to convert dimers of the bacterial chromosome into monomers to permit their segregation at cell division. The protein is Tyrosine recombinase XerS of Streptococcus pyogenes serotype M12 (strain MGAS9429).